A 221-amino-acid chain; its full sequence is MAFYSEDDKSEDYLFKIVLIGDSAVGKSNLLARFARDEFYPNSKSTIGVEFQTQKMDINGKEIKAQIWDTAGQERFRAVTSAYYRGAVGALLVYDISRRQTFHSIGRWLNELHTHSDMNVVTILVGNKSDLKDLREVSTAEGKALAEAQGLFFMETSALDSSNVAAAFETVVKEIYNILSRKVMSSQELNKQDPASLSNGKKVVIPSDGQGEFKKGGCCSS.

21 to 28 (GDSAVGKS) lines the GTP pocket. Residues 43-51 (SKSTIGVEF) carry the Effector region motif. Residues 69–73 (DTAGQ), 127–130 (NKSD), and 157–158 (SA) each bind GTP. 2 S-geranylgeranyl cysteine lipidation sites follow: C218 and C219.

This sequence belongs to the small GTPase superfamily. Rab family.

It is found in the cell membrane. Intracellular vesicle trafficking and protein transport. The chain is Ras-related protein RABA5a (RABA5A) from Arabidopsis thaliana (Mouse-ear cress).